A 639-amino-acid polypeptide reads, in one-letter code: Signal recognition particle receptor subunit alpha (639 aa).

Positions 132 to 317 are disordered; that stretch reads APTTMKKFED…STKPSATKGT (186 aa). Composition is skewed to basic and acidic residues over residues 137 to 146 and 153 to 165; these read KKFEDSEKAK and IETR…EKAK. Position 178 is a phosphoserine (Ser-178). The span at 204-240 shows a compositional bias: basic and acidic residues; the sequence is ELSKEEQIRRKREEFIQKHGRGMEKSSKSSKSDAPKE. Position 285 is a phosphothreonine (Thr-285). A phosphoserine mark is found at Ser-297, Ser-298, and Ser-299. The segment covering 305–315 has biased composition (polar residues); it reads AQNSTKPSATK. An NG domain region spans residues 420 to 637; the sequence is YVVTFCGVNG…NAKAVVAALM (218 aa). 426 to 433 serves as a coordination point for GTP; that stretch reads GVNGVGKS. A Phosphoserine modification is found at Ser-474. 521–525 is a binding site for GTP; sequence DTAGR. A Phosphothreonine modification is found at Thr-579. Residue 589-592 coordinates GTP; sequence TKFD.

The protein belongs to the GTP-binding SRP family. In terms of assembly, heterodimer with SRPRB. Interacts with the signal recognition particle (SRP) complex subunit SRP54.

The protein resides in the endoplasmic reticulum membrane. In terms of biological role, component of the SRP (signal recognition particle) receptor. Ensures, in conjunction with the signal recognition particle, the correct targeting of the nascent secretory proteins to the endoplasmic reticulum membrane system. Forms a guanosine 5'-triphosphate (GTP)-dependent complex with the SRP subunit SRP54. SRP receptor compaction and GTPase rearrangement drive SRP-mediated cotranslational protein translocation into the ER. This is Signal recognition particle receptor subunit alpha from Bos taurus (Bovine).